We begin with the raw amino-acid sequence, 347 residues long: Large ribosomal subunit protein uL10 (347 aa).

The segment at Ala310–Gly347 is disordered. Residues Glu325 to Gly338 show a composition bias toward acidic residues.

This sequence belongs to the universal ribosomal protein uL10 family. In terms of assembly, part of the 50S ribosomal subunit. Forms part of the ribosomal stalk which helps the ribosome interact with GTP-bound translation factors. Forms a heptameric L10(L12)2(L12)2(L12)2 complex, where L10 forms an elongated spine to which the L12 dimers bind in a sequential fashion.

Forms part of the ribosomal stalk, playing a central role in the interaction of the ribosome with GTP-bound translation factors. The chain is Large ribosomal subunit protein uL10 from Methanosarcina mazei (strain ATCC BAA-159 / DSM 3647 / Goe1 / Go1 / JCM 11833 / OCM 88) (Methanosarcina frisia).